Reading from the N-terminus, the 84-residue chain is UPF0473 protein CLD_2004 (84 aa).

The protein belongs to the UPF0473 family.

The polypeptide is UPF0473 protein CLD_2004 (Clostridium botulinum (strain Okra / Type B1)).